Consider the following 1379-residue polypeptide: DNA-directed RNA polymerase subunit beta (1379 aa).

It belongs to the RNA polymerase beta chain family. In terms of assembly, the RNAP catalytic core consists of 2 alpha, 1 beta, 1 beta' and 1 omega subunit. When a sigma factor is associated with the core the holoenzyme is formed, which can initiate transcription.

The enzyme catalyses RNA(n) + a ribonucleoside 5'-triphosphate = RNA(n+1) + diphosphate. Functionally, DNA-dependent RNA polymerase catalyzes the transcription of DNA into RNA using the four ribonucleoside triphosphates as substrates. This chain is DNA-directed RNA polymerase subunit beta, found in Rhizobium johnstonii (strain DSM 114642 / LMG 32736 / 3841) (Rhizobium leguminosarum bv. viciae).